Reading from the N-terminus, the 260-residue chain is Taurine import ATP-binding protein TauB (260 aa).

An ABC transporter domain is found at 6–235; the sequence is AQQVSVVYAS…RYAHGEPMRS (230 aa). An ATP-binding site is contributed by 40–47; the sequence is GASGCGKS.

It belongs to the ABC transporter superfamily. Taurine importer (TC 3.A.1.17.1) family. The complex is composed of two ATP-binding proteins (TauB), two transmembrane proteins (TauC) and a solute-binding protein (TauA).

The protein resides in the cell inner membrane. The enzyme catalyses taurine(out) + ATP + H2O = taurine(in) + ADP + phosphate + H(+). Part of the ABC transporter complex TauABC involved in taurine import. Responsible for energy coupling to the transport system. This is Taurine import ATP-binding protein TauB from Burkholderia pseudomallei (strain 1710b).